A 581-amino-acid polypeptide reads, in one-letter code: Putative aluminum-activated malate transporter 3 (581 aa).

The next 6 helical transmembrane spans lie at 98–118 (MGLALTLTSILIFFKIPGLEL), 122–142 (YLWAILTVVVIFEFSIGATFS), 148–164 (GLGTLSAGGLALGMSWI), 167–187 (MTGNWADVFNAASIFVVAFFA), 201–218 (YGFRVFLLTYCYVIVSGY), and 231–251 (FLLIALGASVGLIVNTCIYPI).

It belongs to the aromatic acid exporter (TC 2.A.85) family.

The protein localises to the membrane. In terms of biological role, malate transporter. The protein is Putative aluminum-activated malate transporter 3 (ALMT3) of Arabidopsis thaliana (Mouse-ear cress).